The chain runs to 331 residues: uncharacterized protein (331 aa).

The protein belongs to the ornithine cyclodeaminase/mu-crystallin family.

This is an uncharacterized protein from Sinorhizobium fredii (strain NBRC 101917 / NGR234).